Reading from the N-terminus, the 344-residue chain is Sorting nexin-16 (344 aa).

The span at 1 to 10 (MATPYVPVPM) shows a compositional bias: pro residues. 2 disordered regions span residues 1-49 (MATP…DSSV) and 83-105 (SIEYSARPRDTEEQHPDALNWED). Polar residues predominate over residues 14–26 (NSASSFTNNRNQR). Residues 27–40 (SSSFGSVSTSSNSS) show a composition bias toward low complexity. Over residues 88–105 (ARPRDTEEQHPDALNWED) the composition is skewed to basic and acidic residues. The PX domain occupies 105 to 218 (DRPSTPTILG…EFLCLDDPPG (114 aa)). Residues Arg144, Thr146, and Arg184 each contribute to the a 1,2-diacyl-sn-glycero-3-phospho-(1D-myo-inositol-3-phosphate) site. Position 222 is a phosphoserine (Ser222). Residues 223–278 (LEESRAFCETLEETNYHLQRELLEKQKEVESLKKLLGEKQLHIDALETRIRTLSLE) adopt a coiled-coil conformation.

The protein belongs to the sorting nexin family. In terms of assembly, homooligomer. Interacts with EGFR.

The protein resides in the early endosome membrane. Its subcellular location is the late endosome membrane. It is found in the cytoplasm. The protein localises to the lysosome. Its function is as follows. May be involved in several stages of intracellular trafficking. Plays a role in protein transport from early to late endosomes. Plays a role in protein transport to the lysosome. Promotes degradation of EGFR after EGF signaling. This Rattus norvegicus (Rat) protein is Sorting nexin-16 (Snx16).